The primary structure comprises 688 residues: MFGWIHESFRQLVTRKYGKDIWEKIVHMSKFELGTESEIAHYYNDDETLRLVNSMANVIGIPIEEIWEAYGGFLIQFTMETGWDELLRAMAPDLEGFLDSLDSLHYFIDHVVYKTKLRGPSFRCDVQADGTLLLHYYSKRSGLYPIVKGVVREVARRIYDTEVVMKVQERKQEHLDAFVTEHVVFVITQIENANSTQPKSISSKADSQIDLSTGIYEISSSDFSLAFPYHICFDPDLFVEHFGNFIKKTFPNAMRQETRVTDLLELVHPEVPFSYESIKYYKNSLFVFRLKGLGDIVHNANDEAKTVLLKGSMVFIDEGKYILYMCSVNVTTVRELIERNLHLSDMQRHDGTRDVIMLNQSRMSQVELNRTLEETTKKLKKMAQELEIEKQKTDELLCELMPASVADSLRSGKAMDAKEFADCTLLFTDIVTFTNICAMCTPYDVVTLLNDLYLRFDRLVGLHDAYKVETIGDAYMIVGGVPERCENHAERVLNISIGMLMESKLVLSPITHKPIKIRLGVHCGPVVAGVVGIKMPRYCLFGDTVNVANKMESNGIQCKIHVSETGKLNGLKANPSYVFIDRGNTEIRGKGMMYTYFLERNDRKSVWELCSRPRSGEQTIDGYMELHDQSIYQEEGGQQENLTVENGNSAQNNHNNNNNTHHSGRKLMNGSSVDPGSHHIRSPTCTIS.

A heme-binding site is contributed by H105. Residues 358–401 (LNQSRMSQVELNRTLEETTKKLKKMAQELEIEKQKTDELLCELM) adopt a coiled-coil conformation. In terms of domain architecture, Guanylate cyclase spans 424 to 552 (TLLFTDIVTF…DTVNVANKME (129 aa)). Residues D429 and D473 each contribute to the Mg(2+) site. The interval 644-688 (VENGNSAQNNHNNNNNTHHSGRKLMNGSSVDPGSHHIRSPTCTIS) is disordered. A compositionally biased stretch (low complexity) spans 646 to 659 (NGNSAQNNHNNNNN).

The protein belongs to the adenylyl cyclase class-4/guanylyl cyclase family. In terms of assembly, heterodimer; heterodimerizes with gcy-36, and possibly with other soluble guanylate cyclases. Heme is required as a cofactor. Expressed in URX, AQR and PQR neurons. Also expressed in ALN, SDQ and BDU neurons, and variably in AVM, PLM and PLN neurons, pharyngeal and body wall muscles, and the excretory cell.

The protein localises to the cytoplasm. It localises to the cell projection. The protein resides in the dendrite. It catalyses the reaction GTP = 3',5'-cyclic GMP + diphosphate. With respect to regulation, regulated by molecular oxygen, which binds to the heme binding site. Probably not activated by nitric oxide (NO). Plays a central role in social feeding behavior and oxygen sensation by synthesizing 3',5'-cyclic guanosine monophosphate (cGMP) from GTP. Oxygen, which binds to its heme-binding sites, probably regulates social behavior by modulating its activity. cGMP is a common second messenger in sensory transduction and is implicated in oxygen sensation. Indeed, C.elegans exhibits a strong behavioral preference for 5-12% oxygen, avoiding higher and lower oxygen levels; a higher level of oxygen inducing a naturally polymorphic social feeding behavior. Involved in avoidance of hyperoxia and for oxygen-induced aggregation and bordering, probably by mediating oxygen-sensing in URX, AQR and PQR sensory neurons. In Caenorhabditis elegans, this protein is Soluble guanylate cyclase gcy-35 (gcy-35).